We begin with the raw amino-acid sequence, 504 residues long: MEEFQVYLELNRSRRHDFLYPLLFREYIYALAHDHGLNKSMIFLENQGYGNKFSSLIVKRLIIRMDQQNHLIISANDSNQNSFFGHNNNLYSQMISSGFAVIVEIPFSLRLVSYSQGEEVAKSHNLQSIHSIFPFLEDKFSHLNYVLDVLIPHPIHLEILVQALRYWVKDASSLHLLRFSLYEYCNLKSFITPKKSISILNTRLFFFLYNSHAREYESIFLFLRNQSSHLRSTSSGVFLERIYFYGKIEYLVEVFYNDFQNNLGLFKDPFIHFIRYQGKTILASKDTPLLMNKWKYYFVDLWQYYFYMWSQSGRVRINQLSKYSLDFLGYLSSVRLNPSVVRSQMLENSFIIDNAMKKLDTRIPIISLIGSLSKAKFCNTLGHPISKPTWADSSDSDIIDRFVRICRNLSHYHSGSSKKKSLYRIKYILRFSCVKTLARKHKSTVRAFLKRLGSEFLEEFFTETEDEHVFSLIFPRVFFTSRKLYRGRIWYLDIICINALVNHE.

It belongs to the intron maturase 2 family. MatK subfamily.

The protein resides in the plastid. The protein localises to the chloroplast. In terms of biological role, usually encoded in the trnK tRNA gene intron. Probably assists in splicing its own and other chloroplast group II introns. The protein is Maturase K of Bombax buonopozense (Red-flowered silk cotton tree).